A 103-amino-acid polypeptide reads, in one-letter code: Large ribosomal subunit protein P2 (103 aa).

The segment at 64–103 (LAISSSQKSEPAQPADTAESTQATENKEEEDEDFDIFAAF) is disordered. Acidic residues predominate over residues 90-103 (KEEEDEDFDIFAAF).

It belongs to the eukaryotic ribosomal protein P1/P2 family. Component of the large ribosomal subunit.

The protein resides in the cytoplasm. In terms of biological role, plays an important role in the elongation step of protein synthesis. The sequence is that of Large ribosomal subunit protein P2 (RPP2A) from Encephalitozoon cuniculi (strain GB-M1) (Microsporidian parasite).